The following is a 237-amino-acid chain: DNA repair protein RecO (237 aa).

This sequence belongs to the RecO family.

In terms of biological role, involved in DNA repair and RecF pathway recombination. In Rickettsia akari (strain Hartford), this protein is DNA repair protein RecO.